The primary structure comprises 332 residues: Biotin synthase (332 aa).

The region spanning 46–275 is the Radical SAM core domain; sequence YYGKKVKLNM…SKEIRISGGR (230 aa). 3 residues coordinate [4Fe-4S] cluster: C64, C68, and C71. Residues C108, C140, C200, and R270 each contribute to the [2Fe-2S] cluster site.

It belongs to the radical SAM superfamily. Biotin synthase family. In terms of assembly, homodimer. [4Fe-4S] cluster is required as a cofactor. Requires [2Fe-2S] cluster as cofactor.

The enzyme catalyses (4R,5S)-dethiobiotin + (sulfur carrier)-SH + 2 reduced [2Fe-2S]-[ferredoxin] + 2 S-adenosyl-L-methionine = (sulfur carrier)-H + biotin + 2 5'-deoxyadenosine + 2 L-methionine + 2 oxidized [2Fe-2S]-[ferredoxin]. It functions in the pathway cofactor biosynthesis; biotin biosynthesis; biotin from 7,8-diaminononanoate: step 2/2. In terms of biological role, catalyzes the conversion of dethiobiotin (DTB) to biotin by the insertion of a sulfur atom into dethiobiotin via a radical-based mechanism. The sequence is that of Biotin synthase from Lysinibacillus sphaericus (Bacillus sphaericus).